We begin with the raw amino-acid sequence, 976 residues long: Mast/stem cell growth factor receptor Kit (976 aa).

The signal sequence occupies residues 1–25 (MRGARGAWDFLCVLLLLLRVQTGSS). Over 26-524 (QPSVSPGEPS…QIHPHTLFTP (499 aa)) the chain is Extracellular. 5 Ig-like C2-type domains span residues 27–112 (PSVS…VFVR), 121–205 (DRSL…LKVR), 212–308 (PVVS…LEVV), 317–410 (PMIN…VYVN), and 413–507 (PEIL…FNFA). Cys-58 and Cys-97 are joined by a disulfide. Residues Asn-130 and Asn-145 are each glycosylated (N-linked (GlcNAc...) asparagine). Intrachain disulfides connect Cys-136–Cys-186, Cys-151–Cys-183, and Cys-233–Cys-290. N-linked (GlcNAc...) asparagine glycans are attached at residues Asn-283, Asn-293, Asn-300, Asn-320, Asn-352, Asn-367, Asn-463, and Asn-486. A disulfide bond links Cys-428 and Cys-491. A helical transmembrane segment spans residues 525 to 545 (LLIGFVIVAGMMCIIVMILTY). Residues 546–976 (KYLQKPMYEV…SQPLLVHDDV (431 aa)) lie on the Cytoplasmic side of the membrane. A phosphotyrosine; by autocatalysis mark is found at Tyr-547, Tyr-553, Tyr-568, and Tyr-570. Tyr-568 contacts Mg(2+). Residues 568–570 (YVY) are important for interaction with phosphotyrosine-binding proteins. Residues 589-937 (LSFGKTLGAG…ISESTNHIYS (349 aa)) form the Protein kinase domain. ATP contacts are provided by residues 596–603 (GAGAFGKV), Lys-623, and 671–677 (EYCCYGD). A phosphotyrosine; by autocatalysis mark is found at Tyr-703, Tyr-721, and Tyr-730. Phosphoserine; by PKC/PRKCA occurs at positions 741 and 746. The active-site Proton acceptor is Asp-792. Arg-796 contacts ATP. Residues Asn-797 and Asp-810 each contribute to the Mg(2+) site. Ser-821 is subject to Phosphoserine. Tyr-823 bears the Phosphotyrosine; by autocatalysis mark. Ser-891 carries the post-translational modification Phosphoserine. Phosphotyrosine; by autocatalysis occurs at positions 900 and 936. Residue Ser-959 is modified to Phosphoserine.

Belongs to the protein kinase superfamily. Tyr protein kinase family. CSF-1/PDGF receptor subfamily. Monomer in the absence of bound KITLG/SCF. Homodimer in the presence of bound KITLG/SCF, forming a heterotetramer with two KITLG/SCF molecules. Interacts (via phosphorylated tyrosine residues) with the adapter proteins GRB2 and GRB7 (via SH2 domain), and SH2B2/APS. Interacts (via C-terminus) with MPDZ (via the tenth PDZ domain). Interacts (via phosphorylated tyrosine residues) with PIK3R1 and PIK3 catalytic subunit. Interacts (via phosphorylated tyrosine) with CRK (isoform Crk-II), FYN, SHC1 and MATK/CHK (via SH2 domain). Interacts with LYN and FES/FPS. Interacts (via phosphorylated tyrosine residues) with the protein phosphatases PTPN6/SHP-1 (via SH2 domain), PTPN11/SHP-2 (via SH2 domain) and PTPRU. Interacts with PLCG1. Interacts with DOK1 and TEC. Interacts (KITLG/SCF-bound) with IL1RL1. Interacts with IL1RAP (independent of stimulation with KITLG/SCF). A mast cell-specific KITLG/SCF-induced interleukin-33 signaling complex contains IL1RL1, IL1RAP, KIT and MYD88. Post-translationally, ubiquitinated by SOCS6. KIT is rapidly ubiquitinated after autophosphorylation induced by KITLG/SCF binding, leading to internalization and degradation. In terms of processing, autophosphorylated on tyrosine residues. KITLG/SCF binding enhances autophosphorylation. Isoform 1 shows low levels of tyrosine phosphorylation in the absence of added KITLG/SCF (in vitro). Kinase activity is down-regulated by phosphorylation on serine residues by protein kinase C family members. Phosphorylation at Tyr-568 is required for interaction with PTPN11/SHP-2, CRK (isoform Crk-II) and members of the SRC tyrosine-protein kinase family. Phosphorylation at Tyr-570 is required for interaction with PTPN6/SHP-1. Phosphorylation at Tyr-703, Tyr-823 and Tyr-936 is important for interaction with GRB2. Phosphorylation at Tyr-721 is important for interaction with PIK3R1. Phosphorylation at Tyr-823 and Tyr-936 is important for interaction with GRB7. As to expression, in testis, detected in spermatogonia in the basal layer and in interstitial Leydig cells but not in Sertoli cells or spermatocytes inside the seminiferous tubules (at protein level). Expression is maintained in ejaculated spermatozoa (at protein level).

Its subcellular location is the cell membrane. The protein resides in the cytoplasm. It catalyses the reaction L-tyrosyl-[protein] + ATP = O-phospho-L-tyrosyl-[protein] + ADP + H(+). Present in an inactive conformation in the absence of bound ligand. KITLG/SCF binding leads to dimerization and activation by autophosphorylation on tyrosine residues. Activity is down-regulated by PRKCA-mediated phosphorylation on serine residues. Inhibited by imatinib/STI-571 (Gleevec) and sunitinib; these compounds maintain the kinase in an inactive conformation. Functionally, tyrosine-protein kinase that acts as a cell-surface receptor for the cytokine KITLG/SCF and plays an essential role in the regulation of cell survival and proliferation, hematopoiesis, stem cell maintenance, gametogenesis, mast cell development, migration and function, and in melanogenesis. In response to KITLG/SCF binding, KIT can activate several signaling pathways. Phosphorylates PIK3R1, PLCG1, SH2B2/APS and CBL. Activates the AKT1 signaling pathway by phosphorylation of PIK3R1, the regulatory subunit of phosphatidylinositol 3-kinase. Activated KIT also transmits signals via GRB2 and activation of RAS, RAF1 and the MAP kinases MAPK1/ERK2 and/or MAPK3/ERK1. Promotes activation of STAT family members STAT1, STAT3, STAT5A and STAT5B. Activation of PLCG1 leads to the production of the cellular signaling molecules diacylglycerol and inositol 1,4,5-trisphosphate. KIT signaling is modulated by protein phosphatases, and by rapid internalization and degradation of the receptor. Activated KIT promotes phosphorylation of the protein phosphatases PTPN6/SHP-1 and PTPRU, and of the transcription factors STAT1, STAT3, STAT5A and STAT5B. Promotes phosphorylation of PIK3R1, CBL, CRK (isoform Crk-II), LYN, MAPK1/ERK2 and/or MAPK3/ERK1, PLCG1, SRC and SHC1. The chain is Mast/stem cell growth factor receptor Kit (KIT) from Homo sapiens (Human).